The sequence spans 252 residues: 5'-nucleotidase SurE (252 aa).

A divalent metal cation is bound by residues Asp8, Asp9, Ser39, and Asn91.

The protein belongs to the SurE nucleotidase family. A divalent metal cation is required as a cofactor.

The protein localises to the cytoplasm. The catalysed reaction is a ribonucleoside 5'-phosphate + H2O = a ribonucleoside + phosphate. Nucleotidase that shows phosphatase activity on nucleoside 5'-monophosphates. In Gemmatimonas aurantiaca (strain DSM 14586 / JCM 11422 / NBRC 100505 / T-27), this protein is 5'-nucleotidase SurE.